The chain runs to 1678 residues: Clathrin heavy chain (1678 aa).

WD40-like repeat regions lie at residues 24–67 (SFSF…RPIS), 68–107 (ADSA…MNED), 108–149 (VVFW…SSLN), 150–195 (GCQI…QAIE), 196–257 (GHAA…PEAQ), 258–301 (NDFP…ISAD), and 302–330 (TIFV…VTVD). CHCR repeat units follow at residues 538 to 684 (VAEE…QICV), 687 to 829 (ATKY…SEDI), 834 to 973 (ILVV…QLID), 980 to 1125 (LSET…VKEA), 1129 to 1270 (YIKA…FRLA), 1275 to 1421 (LHIV…LLLN), and 1424 to 1567 (LLVL…YDCF). Residues 1334-1643 (REHLELFWSR…IQMEPQLMIT (310 aa)) form an involved in binding clathrin light chain region. Residues 1552 to 1677 (EELLGWFLER…AGGRNMGYPY (126 aa)) form a trimerization region.

Belongs to the clathrin heavy chain family. As to quaternary structure, clathrin triskelions, composed of 3 heavy chains and 3 light chains, are the basic subunits of the clathrin coat. Interacts with sau.

The protein localises to the cytoplasmic vesicle membrane. The protein resides in the membrane. It localises to the coated pit. Functionally, clathrin is the major protein of the polyhedral coat of coated pits and vesicles. The polypeptide is Clathrin heavy chain (Chc) (Drosophila melanogaster (Fruit fly)).